Consider the following 424-residue polypeptide: Serine--tRNA ligase (424 aa).

232–234 (TAE) contacts L-serine. 263–265 (RQE) contacts ATP. Residue Glu-286 coordinates L-serine. Residue 350–353 (EIGS) coordinates ATP. Ser-386 provides a ligand contact to L-serine.

Belongs to the class-II aminoacyl-tRNA synthetase family. Type-1 seryl-tRNA synthetase subfamily. In terms of assembly, homodimer. The tRNA molecule binds across the dimer.

It is found in the cytoplasm. It catalyses the reaction tRNA(Ser) + L-serine + ATP = L-seryl-tRNA(Ser) + AMP + diphosphate + H(+). The enzyme catalyses tRNA(Sec) + L-serine + ATP = L-seryl-tRNA(Sec) + AMP + diphosphate + H(+). Its pathway is aminoacyl-tRNA biosynthesis; selenocysteinyl-tRNA(Sec) biosynthesis; L-seryl-tRNA(Sec) from L-serine and tRNA(Sec): step 1/1. Catalyzes the attachment of serine to tRNA(Ser). Is also able to aminoacylate tRNA(Sec) with serine, to form the misacylated tRNA L-seryl-tRNA(Sec), which will be further converted into selenocysteinyl-tRNA(Sec). This Aster yellows witches'-broom phytoplasma (strain AYWB) protein is Serine--tRNA ligase.